The chain runs to 150 residues: Clitocypin (150 aa).

This sequence belongs to the protease inhibitor I48 family. As to quaternary structure, homodimer. In terms of tissue distribution, uniformly expressed throughout the mature fruiting body (at mRNA and protein level).

Functionally, binds and inhibits cysteine proteinases. Inhibits most strongly papain and cathepsin L, more weakly bromelain and cathepsin B while it is completely ineffective against cathepsin H. This chain is Clitocypin (Cnc1), found in Clitocybe nebularis (Clouded agaric).